Reading from the N-terminus, the 396-residue chain is N-terminal EF-hand calcium-binding protein 3 (396 aa).

The segment covering 14–34 (PPAPQPQPQTPRHPQLAPDPG) has biased composition (pro residues). The disordered stretch occupies residues 14-36 (PPAPQPQPQTPRHPQLAPDPGPA). The region spanning 36–71 (AGHTLFQDVFRRADKNDDGKLSFEEFQNYFADGVLS) is the EF-hand domain. The Ca(2+) site is built by Asp49, Asn51, Asp53, Lys55, and Glu60. Residues 181-190 (VEAQSRLCGS) are required for interaction with APBA3. The segment at 197-220 (ALRSVSRSSTWSPGSSDTGRSSEA) is disordered. The span at 206 to 217 (TWSPGSSDTGRS) shows a compositional bias: polar residues. The ABM domain occupies 296 to 385 (LMAQRQVQVA…RAPDTLTTVF (90 aa)).

As to quaternary structure, interacts with the N-terminal domain of APBA2. Interacts with NEK2. Interacts with APBA3; APBA3 seems to mediate the interaction between NECAB3 and HIF1AN. In terms of processing, phosphorylated by NEK2. Strongly expressed in heart and skeletal muscle, moderately in brain and pancreas.

It is found in the golgi apparatus. Inhibits the interaction of APBA2 with amyloid-beta precursor protein (APP), and hence allows formation of amyloid-beta. May enhance the activity of HIF1A and thus promote glycolysis under normoxic conditions; the function requires its ABM domain and may implicate the stabilization of the interaction between HIF1AN and APBA3. The chain is N-terminal EF-hand calcium-binding protein 3 (NECAB3) from Homo sapiens (Human).